A 374-amino-acid polypeptide reads, in one-letter code: WAT1-related protein At2g39510 (374 aa).

The next 10 membrane-spanning stretches (helical) occupy residues 9–29, 38–58, 64–84, 99–119, 135–155, 182–202, 212–232, 249–269, 284–304, and 306–326; these read FITV…AKFA, VLAS…AYFL, PKMT…EPTI, TFTA…AWIF, ILGT…KGPL, GASL…LQAI, SLTA…ALFI, LAAV…QGVI, LSMV…MFLG, and ILGA…KSKD. 2 EamA domains span residues 19–147 and 191–320; these read YAGL…GAML and ICWA…YSVL. A disordered region spans residues 350-374; that stretch reads SKANAKMDTNDASVVISRPNTNESV.

The protein belongs to the drug/metabolite transporter (DMT) superfamily. Plant drug/metabolite exporter (P-DME) (TC 2.A.7.4) family.

Its subcellular location is the membrane. In Arabidopsis thaliana (Mouse-ear cress), this protein is WAT1-related protein At2g39510.